A 502-amino-acid polypeptide reads, in one-letter code: ATP synthase subunit alpha (502 aa).

169-176 (GDRQTGKT) is an ATP binding site.

The protein belongs to the ATPase alpha/beta chains family. As to quaternary structure, F-type ATPases have 2 components, CF(1) - the catalytic core - and CF(0) - the membrane proton channel. CF(1) has five subunits: alpha(3), beta(3), gamma(1), delta(1), epsilon(1). CF(0) has three main subunits: a(1), b(2) and c(9-12). The alpha and beta chains form an alternating ring which encloses part of the gamma chain. CF(1) is attached to CF(0) by a central stalk formed by the gamma and epsilon chains, while a peripheral stalk is formed by the delta and b chains.

It is found in the cell inner membrane. The enzyme catalyses ATP + H2O + 4 H(+)(in) = ADP + phosphate + 5 H(+)(out). In terms of biological role, produces ATP from ADP in the presence of a proton gradient across the membrane. The alpha chain is a regulatory subunit. This Geotalea uraniireducens (strain Rf4) (Geobacter uraniireducens) protein is ATP synthase subunit alpha.